The chain runs to 270 residues: Type II restriction enzyme CeqI (270 aa).

The enzyme catalyses Endonucleolytic cleavage of DNA to give specific double-stranded fragments with terminal 5'-phosphates.. Functionally, a P subtype restriction enzyme that recognizes the double-stranded sequence 5'-GATATC-3' and cleaves after T-3. The chain is Type II restriction enzyme CeqI (ceqIR) from Rhodococcus hoagii (Corynebacterium equii).